Here is a 466-residue protein sequence, read N- to C-terminus: Uronate isomerase (466 aa).

This sequence belongs to the metallo-dependent hydrolases superfamily. Uronate isomerase family.

The enzyme catalyses D-glucuronate = D-fructuronate. The catalysed reaction is aldehydo-D-galacturonate = keto-D-tagaturonate. The protein operates within carbohydrate metabolism; pentose and glucuronate interconversion. The polypeptide is Uronate isomerase (Brucella canis (strain ATCC 23365 / NCTC 10854 / RM-666)).